Reading from the N-terminus, the 456-residue chain is Flagellum-specific ATP synthase (456 aa).

182 to 189 (AGSGVGKS) contributes to the ATP binding site.

The protein belongs to the ATPase alpha/beta chains family.

It localises to the cytoplasm. The enzyme catalyses ATP + H2O + 4 H(+)(in) = ADP + phosphate + 5 H(+)(out). Its function is as follows. Probable catalytic subunit of a protein translocase for flagellum-specific export, or a proton translocase involved in local circuits at the flagellum. May be involved in a specialized protein export pathway that proceeds without signal peptide cleavage. The polypeptide is Flagellum-specific ATP synthase (fliI) (Salmonella typhimurium (strain LT2 / SGSC1412 / ATCC 700720)).